The following is a 95-amino-acid chain: MNLKPLADRVIVKPAPAEEKTKGGLYIPDTGKEKPQYGEVVAVGAGKVADSGQLLEMQVAVGNKVLYGKYSGTEVAVEGEDYLIMRESDIFAILD.

Belongs to the GroES chaperonin family. As to quaternary structure, heptamer of 7 subunits arranged in a ring. Interacts with the chaperonin GroEL.

It localises to the cytoplasm. Together with the chaperonin GroEL, plays an essential role in assisting protein folding. The GroEL-GroES system forms a nano-cage that allows encapsulation of the non-native substrate proteins and provides a physical environment optimized to promote and accelerate protein folding. GroES binds to the apical surface of the GroEL ring, thereby capping the opening of the GroEL channel. This is Co-chaperonin GroES from Chlorobium phaeobacteroides (strain BS1).